A 556-amino-acid polypeptide reads, in one-letter code: Dihydroxy-acid dehydratase (556 aa).

Asp78 is a Mg(2+) binding site. [2Fe-2S] cluster is bound at residue Cys119. Asp120 and Lys121 together coordinate Mg(2+). At Lys121 the chain carries N6-carboxylysine. Cys191 serves as a coordination point for [2Fe-2S] cluster. Residue Glu442 participates in Mg(2+) binding. Catalysis depends on Ser468, which acts as the Proton acceptor.

The protein belongs to the IlvD/Edd family. In terms of assembly, homodimer. It depends on [2Fe-2S] cluster as a cofactor. Mg(2+) serves as cofactor.

The enzyme catalyses (2R)-2,3-dihydroxy-3-methylbutanoate = 3-methyl-2-oxobutanoate + H2O. It catalyses the reaction (2R,3R)-2,3-dihydroxy-3-methylpentanoate = (S)-3-methyl-2-oxopentanoate + H2O. Its pathway is amino-acid biosynthesis; L-isoleucine biosynthesis; L-isoleucine from 2-oxobutanoate: step 3/4. It participates in amino-acid biosynthesis; L-valine biosynthesis; L-valine from pyruvate: step 3/4. Functionally, functions in the biosynthesis of branched-chain amino acids. Catalyzes the dehydration of (2R,3R)-2,3-dihydroxy-3-methylpentanoate (2,3-dihydroxy-3-methylvalerate) into 2-oxo-3-methylpentanoate (2-oxo-3-methylvalerate) and of (2R)-2,3-dihydroxy-3-methylbutanoate (2,3-dihydroxyisovalerate) into 2-oxo-3-methylbutanoate (2-oxoisovalerate), the penultimate precursor to L-isoleucine and L-valine, respectively. This is Dihydroxy-acid dehydratase from Clostridium kluyveri (strain NBRC 12016).